A 420-amino-acid polypeptide reads, in one-letter code: Protein disulfide isomerase CRELD1 (420 aa).

The first 29 residues, Met-1–Leu-29, serve as a signal peptide directing secretion. Over Gln-30–Glu-362 the chain is Extracellular. The short motif at Cys-46–Cys-49 is the CXXC element. A disulfide bond links Cys-46 and Cys-49. N-linked (GlcNAc...) asparagine glycosylation is present at Asn-79. Residues Leu-153–Gly-193 enclose the EGF-like 1 domain. Cystine bridges form between Cys-155–Cys-169, Cys-163–Cys-181, and Cys-183–Cys-192. Asn-205 carries an N-linked (GlcNAc...) asparagine glycan. FU repeat units lie at residues His-208 to Cys-256 and Ser-268 to Pro-315. The CXXC signature appears at Cys-278 to Cys-281. 4 disulfide bridges follow: Cys-278–Cys-281, Cys-309–Cys-321, Cys-314–Cys-330, and Cys-332–Cys-343. The 40-residue stretch at Asp-305–Val-344 folds into the EGF-like 2; calcium-binding domain. Residues Leu-363–Ala-383 traverse the membrane as a helical segment. Residue Lys-384 is a topological domain, cytoplasmic. A helical transmembrane segment spans residues Gly-385–Leu-405. The Extracellular portion of the chain corresponds to Ser-406–Arg-420.

Belongs to the CRELD family. Highly expressed in fetal lung, liver, kidney, adult heart, brain and skeletal muscle. Weakly expressed in placenta, fetal brain, and adult lung, liver, kidney and pancreas.

It localises to the membrane. It carries out the reaction Catalyzes the rearrangement of -S-S- bonds in proteins.. In terms of biological role, protein disulfide isomerase. Promotes the localization of acetylcholine receptors (AChRs) to the plasma membrane. The polypeptide is Protein disulfide isomerase CRELD1 (CRELD1) (Homo sapiens (Human)).